Consider the following 94-residue polypeptide: uncharacterized protein (94 aa).

Belongs to the phage portal family. HK97 subfamily.

This is an uncharacterized protein from Rickettsia conorii (strain ATCC VR-613 / Malish 7).